Here is a 258-residue protein sequence, read N- to C-terminus: Short-chain dehydrogenase reductase 3c (258 aa).

Position 12-36 (I12–V36) interacts with NAD(+). S144 contributes to the substrate binding site. The Proton acceptor role is filled by Y156.

The protein belongs to the short-chain dehydrogenases/reductases (SDR) family.

This chain is Short-chain dehydrogenase reductase 3c (SDR3c), found in Arabidopsis thaliana (Mouse-ear cress).